The primary structure comprises 264 residues: MSTTYIPYRLDGKVALVTGSGRGIGAAIATQLGRLGAKVVVNYANASEAAEKVVSEIKSFGTDAVAFKADVRQVAQTAKLMDDAVAHFGSLDIVCSNSGVVSFGHIGEVTEEEFDRVFSLNTRGQFFVAREAYRHLNNGGRIILMSSNTAKDFSVPKHSLYSGSKGAIDSFVRVFSKDCGDKKITVNAVAPGGTVTDMFHDVSQHYIPGGEKYTAEERQEMAAHASPLTRNGFPVDIARVVGFLASNEAEWVNGKILTVDGGAA.

NADP(+) contacts are provided by Ile-24, Asp-70, Asn-97, and Arg-130. Active-site proton donor residues include Ser-146 and Ser-147. Tyr-161, Lys-165, and Thr-196 together coordinate NADP(+). The active-site Proton acceptor is Tyr-161. Lys-165 (lowers pKa of active site Tyr) is an active-site residue.

It belongs to the short-chain dehydrogenases/reductases (SDR) family.

It carries out the reaction 3,8,9,10-tetrahydroxy-6-methyl-1,4-dihydroanthracen-1-one + NADPH + H(+) = (3R)-3,8,9,10-tetrahydroxy-6-methyl-1,2,3,4-tetrahydroanthracen-1-one + NADP(+). The protein operates within secondary metabolite biosynthesis. Short chain dehydrogenase/reductase; part of the gene cluster that mediates the biosynthesis of the dimeric xanthones cryptosporioptides. The pathway begins with the synthesis of atrochrysone thioester by the polyketide synthase dmx-nrPKS. The atrochrysone carboxyl ACP thioesterase dmxR1 then breaks the thioester bond and releases the atrochrysone carboxylic acid from dmx-nrPKS. Atrochrysone carboxylic acid is decarboxylated by the decarboxylase dmxR15, and oxidized by the anthrone oxygenase dmxR16 to yield emodin. Emodin is then reduced to emodin hydroquinone by the oxidoreductase dmxR7. A-ring reduction by the short chain dehydrogenase dmxR18, dehydration by the scytalone dehydratase-like protein dmxR17 and probable spontaneous re-oxidation, results in overall deoxygenation to chrysophanol. Baeyer-Villiger oxidation by the Baeyer-Villiger monooxygenase (BVMO) dmxR6 then yields monodictylactone in equilibrium with monodictyphenone. In the case of the cryptosporioptides biosynthesis, monodictylactone is reduced at C-12 to an alcohol (by the short chain dehydrogenases dmxR12 or dmxR8) and hydroxylated at C-5 by dmxR9, yielding the electron-rich aromatic which could eliminate H(2)O to form the ortho-quinonemethide, followed by tautomerisation to paraquinone and complete the formal reduction to produce the 10-methylgroup. Conjugate addition of C-4a-OH to the resulting paraquinone by the monooxygenase dmxR10 then gives cyclohexadienone, which is then reduced at C-5 by the short chain dehydrogenase dmxR3 to give the dihydroxanthone. The 6,7-epoxide in the cryptosporioptides could be introduced by the cytochrome P450 monooxygenase dmxL3. The highly reducing PKS dmxL2 manufactures butyrate, which is further carboxylated by dmxL1 to form ethylmalonate. It is not yet clear whether the carboxylation occurs while the butyrate is attached to the ACP of dmxL2, but this unusual fungal metabolite could then be esterified to O-5 by the O-acetyltransferase dmxR13. Finally, dimerization performed by dmxR5 gives the observed dimers cryptosporioptides A, B and C as the final products of the pathway. This Cryptosporiopsis sp. (strain 8999) protein is Short chain dehydrogenase/reductase dmxR18.